The primary structure comprises 313 residues: Beta-lactamase BRO-1 (313 aa).

The N-terminal stretch at 1 to 25 is a signal peptide; that stretch reads MQRRHFLQKTLLALPIIFSGNLLTG. Residue C26 is the site of N-palmitoyl cysteine attachment. C26 is lipidated: S-diacylglycerol cysteine. The Acyl-ester intermediate role is filled by S90. Position 255-257 (255-257) interacts with substrate; the sequence is KTG.

It belongs to the class-A beta-lactamase family.

It is found in the cell membrane. It carries out the reaction a beta-lactam + H2O = a substituted beta-amino acid. The protein is Beta-lactamase BRO-1 (bla) of Moraxella catarrhalis (Branhamella catarrhalis).